A 342-amino-acid chain; its full sequence is Uricase (342 aa).

Catalysis depends on charge relay system residues lysine 35 and threonine 80. 7 residues coordinate urate: threonine 80, aspartate 81, phenylalanine 204, arginine 221, valine 269, glutamine 270, and asparagine 296. Histidine 298 functions as the Charge relay system in the catalytic mechanism. Residues 340-342 (SHL) carry the Microbody targeting signal motif.

It belongs to the uricase family. As to expression, malpighian tubules.

It is found in the peroxisome. The enzyme catalyses urate + O2 + H2O = 5-hydroxyisourate + H2O2. It functions in the pathway purine metabolism; urate degradation; (S)-allantoin from urate: step 1/3. Repressed by 20-hydroxyecdysone. In terms of biological role, catalyzes the oxidation of uric acid to 5-hydroxyisourate, which is further processed to form (S)-allantoin. The polypeptide is Uricase (Uro) (Drosophila virilis (Fruit fly)).